A 159-amino-acid chain; its full sequence is Transcriptional repressor NrdR (159 aa).

A zinc finger lies at 3-34 (CPTCQNTDSRVLESRSADTGKSVRRRRECLNC). Positions 49–139 (ISVIKKDGSR…VYRKFNGVKD (91 aa)) constitute an ATP-cone domain.

The protein belongs to the NrdR family. Zn(2+) serves as cofactor.

In terms of biological role, negatively regulates transcription of bacterial ribonucleotide reductase nrd genes and operons by binding to NrdR-boxes. The sequence is that of Transcriptional repressor NrdR from Prochlorococcus marinus subsp. pastoris (strain CCMP1986 / NIES-2087 / MED4).